A 181-amino-acid polypeptide reads, in one-letter code: Adenine phosphoribosyltransferase 2 (181 aa).

Serine 2 is modified (N-acetylserine).

It belongs to the purine/pyrimidine phosphoribosyltransferase family.

Its subcellular location is the cytoplasm. It carries out the reaction AMP + diphosphate = 5-phospho-alpha-D-ribose 1-diphosphate + adenine. The protein operates within purine metabolism; AMP biosynthesis via salvage pathway; AMP from adenine: step 1/1. In terms of biological role, catalyzes a salvage reaction resulting in the formation of AMP, that is energically less costly than de novo synthesis. May lack catalytic activity. The sequence is that of Adenine phosphoribosyltransferase 2 (APT2) from Saccharomyces cerevisiae (strain ATCC 204508 / S288c) (Baker's yeast).